A 182-amino-acid chain; its full sequence is MKFFIFTCLLAVALAKPKIEQSSSEETIAVSQEVSPNLENICSTACEEPIKNINEVEYVEVPTEIKDQEFYQKVNLLQYLQALYQYPTVMDPWTRAETKAIPFIRTMQYKQEKDATKHTSQKTELTEEEKAFLKYLDEMKQYYQKFVFPQYLKNAHHFQKTMNPWNHVKTIIYQSVPTLRYL.

The first 15 residues, 1-15 (MKFFIFTCLLAVALA), serve as a signal peptide directing secretion. Phosphoserine is present on residues Ser22, Ser23, and Ser24.

The protein belongs to the alpha-casein family. As to expression, mammary gland specific. Secreted in milk.

It is found in the secreted. Important role in the capacity of milk to transport calcium phosphate. This is Alpha-S2-casein (CSN1S2) from Oryctolagus cuniculus (Rabbit).